Reading from the N-terminus, the 75-residue chain is Small ribosomal subunit protein bS18 (75 aa).

It belongs to the bacterial ribosomal protein bS18 family. As to quaternary structure, part of the 30S ribosomal subunit. Forms a tight heterodimer with protein bS6.

Functionally, binds as a heterodimer with protein bS6 to the central domain of the 16S rRNA, where it helps stabilize the platform of the 30S subunit. The polypeptide is Small ribosomal subunit protein bS18 (rbsR) (Rhodobacter capsulatus (strain ATCC BAA-309 / NBRC 16581 / SB1003)).